We begin with the raw amino-acid sequence, 562 residues long: NAD-dependent malic enzyme (562 aa).

The Proton donor role is filled by Tyr101. Arg154 contacts NAD(+). The Proton acceptor role is filled by Lys172. Residues Glu243, Asp244, and Asp267 each coordinate a divalent metal cation. Residues Asp267 and Asn415 each contribute to the NAD(+) site.

It belongs to the malic enzymes family. In terms of assembly, homotetramer. It depends on Mg(2+) as a cofactor. Mn(2+) serves as cofactor.

It carries out the reaction (S)-malate + NAD(+) = pyruvate + CO2 + NADH. The enzyme catalyses oxaloacetate + H(+) = pyruvate + CO2. The chain is NAD-dependent malic enzyme from Aliivibrio salmonicida (strain LFI1238) (Vibrio salmonicida (strain LFI1238)).